We begin with the raw amino-acid sequence, 147 residues long: Low molecular weight protein-tyrosine-phosphatase Wzb (147 aa).

Residue Cys-9 is the Nucleophile of the active site. The active site involves Arg-15. Asp-115 (proton donor) is an active-site residue.

This sequence belongs to the low molecular weight phosphotyrosine protein phosphatase family.

It carries out the reaction O-phospho-L-tyrosyl-[protein] + H2O = L-tyrosyl-[protein] + phosphate. Its pathway is glycan metabolism; exopolysaccharide biosynthesis. In terms of biological role, dephosphorylates Wzc. Required for the extracellular polysaccharide colanic acid synthesis. Probably involved in the export of colanic acid from the cell to medium. Involved in protection of cells against contact-dependent growth inhibition (CDI). The protein is Low molecular weight protein-tyrosine-phosphatase Wzb (wzb) of Escherichia coli O157:H7.